The primary structure comprises 1124 residues: DNA-directed RNA polymerase subunit Rpo2 (1124 aa).

The Zn(2+) site is built by cysteine 1061, cysteine 1064, cysteine 1079, and histidine 1082.

Belongs to the RNA polymerase beta chain family. Part of the 13-subunit RNA polymerase complex. Zn(2+) serves as cofactor.

The protein resides in the cytoplasm. It catalyses the reaction RNA(n) + a ribonucleoside 5'-triphosphate = RNA(n+1) + diphosphate. Functionally, DNA-dependent RNA polymerase (RNAP) catalyzes the transcription of DNA into RNA using the four ribonucleoside triphosphates as substrates. This subunit is involved in DNA promoter recognition. The protein is DNA-directed RNA polymerase subunit Rpo2 of Saccharolobus solfataricus (strain ATCC 35092 / DSM 1617 / JCM 11322 / P2) (Sulfolobus solfataricus).